The following is a 142-amino-acid chain: Transcriptional regulator MraZ (142 aa).

2 SpoVT-AbrB domains span residues 5 to 47 and 76 to 119; these read THTP…PTET and ASDT…DATE.

This sequence belongs to the MraZ family. Forms oligomers.

Its subcellular location is the cytoplasm. It is found in the nucleoid. In Cutibacterium acnes (strain DSM 16379 / KPA171202) (Propionibacterium acnes), this protein is Transcriptional regulator MraZ.